A 177-amino-acid chain; its full sequence is Nucleoside triphosphate/diphosphate phosphatase (177 aa).

The active-site Proton donor is Arg-23. Asn-87, Asp-103, Asp-105, Asp-107, Asp-120, and Glu-123 together coordinate Mg(2+).

The protein belongs to the Ntdp family. Mg(2+) is required as a cofactor.

It carries out the reaction a ribonucleoside 5'-triphosphate + H2O = a ribonucleoside 5'-diphosphate + phosphate + H(+). The catalysed reaction is a ribonucleoside 5'-diphosphate + H2O = a ribonucleoside 5'-phosphate + phosphate + H(+). Its function is as follows. Has nucleoside phosphatase activity towards nucleoside triphosphates and nucleoside diphosphates. The protein is Nucleoside triphosphate/diphosphate phosphatase of Streptococcus pneumoniae serotype 2 (strain D39 / NCTC 7466).